The chain runs to 238 residues: MRPSGRQPQEMRTVSFEPGVAKHAEGSCLVRFGDTHVLCTASLEERVPPFLKGGGQGWVTAEYGMLPRSTHERMRREAAQGKQSGRTQEIQRLVGRSLRSVVDLKALGERQISVDCDVLQADGGTRTASITGAWVALHQCIEWMRARSMISAPVLKDHVAAISCGIYQGVPVVDLDYAEDSTADTDANFVITGKGGICEIQGTAEGEPFSDEEFLSLLALAKTSIADLVRRQKEAVSA.

Phosphate contacts are provided by residues R86 and 124–126; that span reads GTR.

It belongs to the RNase PH family. As to quaternary structure, homohexameric ring arranged as a trimer of dimers.

It carries out the reaction tRNA(n+1) + phosphate = tRNA(n) + a ribonucleoside 5'-diphosphate. In terms of biological role, phosphorolytic 3'-5' exoribonuclease that plays an important role in tRNA 3'-end maturation. Removes nucleotide residues following the 3'-CCA terminus of tRNAs; can also add nucleotides to the ends of RNA molecules by using nucleoside diphosphates as substrates, but this may not be physiologically important. Probably plays a role in initiation of 16S rRNA degradation (leading to ribosome degradation) during starvation. This is Ribonuclease PH from Parvibaculum lavamentivorans (strain DS-1 / DSM 13023 / NCIMB 13966).